Here is a 296-residue protein sequence, read N- to C-terminus: Centromere protein O (296 aa).

A coiled-coil region spans residues 17 to 105; it reads VLAHLERLET…NMKAILQAYR (89 aa).

This sequence belongs to the CENP-O/MCM21 family. Component of the CENPA-CAD complex, composed of CENPI, CENPK, CENPL, CENPO, CENPP, CENPQ, CENPR and CENPS. The CENPA-CAD complex interacts with the CENPA-NAC complex, at least composed of CENPA, CENPC, CENPH, CENPM, CENPN, CENPT and CENPU.

The protein resides in the nucleus. It localises to the chromosome. The protein localises to the centromere. Its subcellular location is the kinetochore. Component of the CENPA-CAD (nucleosome distal) complex, a complex recruited to centromeres which is involved in assembly of kinetochore proteins, mitotic progression and chromosome segregation. May be involved in incorporation of newly synthesized CENPA into centromeres via its interaction with the CENPA-NAC complex. Modulates the kinetochore-bound levels of NDC80 complex. This is Centromere protein O (CENPO) from Bos taurus (Bovine).